The sequence spans 401 residues: Methionyl-tRNA formyltransferase, mitochondrial (401 aa).

The transit peptide at 1–26 directs the protein to the mitochondrion; that stretch reads MVKMRRITPTRLLFTCRYISNNASPP. (6R)-10-formyltetrahydrofolate contacts are provided by residues 18 to 20 and 66 to 70; these read YIS and VVTRS.

The protein belongs to the Fmt family. Post-translationally, phosphorylated by GCN2 in response to nutrient deprivation. Phosphorylation mediates retention of FMT1 in the cytoplasm.

The protein resides in the mitochondrion. It is found in the mitochondrion matrix. Its subcellular location is the cytoplasm. It carries out the reaction L-methionyl-tRNA(fMet) + (6R)-10-formyltetrahydrofolate = N-formyl-L-methionyl-tRNA(fMet) + (6S)-5,6,7,8-tetrahydrofolate + H(+). Formylates methionyl-tRNA in mitochondria and the cytoplasm. Responsible for the formylation of the 8 N-terminally formylated (Nt-formylated) mitochondrial matrix proteins that are encoded by mitochondrial DNA. Nt-formylated proteins in the cytoplasm are strongly up-regulated in stationary phase or upon starvation for specific amino acids (His or Lys) and are targeted for degradation by a PSH1 E3 ubiquitin ligase-mediated fMet/N-end rule pathway. Increased Nt-formylation of cytosolic proteins appears to be important for adaptation to these stresses. Stationary phase-degraded Nt-formylated proteins include histone H3-like centromeric protein CSE4, Mediator complex subunit 3 (PGD1) and small ribosomal subunit protein uS8-A (RPS22A). The sequence is that of Methionyl-tRNA formyltransferase, mitochondrial (FMT1) from Saccharomyces cerevisiae (strain ATCC 204508 / S288c) (Baker's yeast).